A 577-amino-acid chain; its full sequence is Arginine--tRNA ligase (577 aa).

A 'HIGH' region motif is present at residues 122–132 (PNVAKEMHVGH).

It belongs to the class-I aminoacyl-tRNA synthetase family. In terms of assembly, monomer.

The protein resides in the cytoplasm. The catalysed reaction is tRNA(Arg) + L-arginine + ATP = L-arginyl-tRNA(Arg) + AMP + diphosphate. The protein is Arginine--tRNA ligase of Salmonella choleraesuis (strain SC-B67).